Reading from the N-terminus, the 340-residue chain is N-acetyl-gamma-glutamyl-phosphate reductase (340 aa).

Cys-149 is a catalytic residue.

The protein belongs to the NAGSA dehydrogenase family. Type 1 subfamily.

It is found in the cytoplasm. It carries out the reaction N-acetyl-L-glutamate 5-semialdehyde + phosphate + NADP(+) = N-acetyl-L-glutamyl 5-phosphate + NADPH + H(+). Its pathway is amino-acid biosynthesis; L-arginine biosynthesis; N(2)-acetyl-L-ornithine from L-glutamate: step 3/4. In terms of biological role, catalyzes the NADPH-dependent reduction of N-acetyl-5-glutamyl phosphate to yield N-acetyl-L-glutamate 5-semialdehyde. The sequence is that of N-acetyl-gamma-glutamyl-phosphate reductase from Vesicomyosocius okutanii subsp. Calyptogena okutanii (strain HA).